The chain runs to 737 residues: Phosphoribosylformylglycinamidine synthase subunit PurL (737 aa).

H50 is an active-site residue. ATP-binding residues include Y53 and K92. Residue E94 coordinates Mg(2+). Residues S95 to H98 and R117 each bind substrate. H96 acts as the Proton acceptor in catalysis. D118 serves as a coordination point for Mg(2+). Position 241 (Q241) interacts with substrate. D269 is a Mg(2+) binding site. E313–Q315 contacts substrate. The ATP site is built by D494 and G531. N532 lines the Mg(2+) pocket. S534 contributes to the substrate binding site.

The protein belongs to the FGAMS family. In terms of assembly, monomer. Part of the FGAM synthase complex composed of 1 PurL, 1 PurQ and 2 PurS subunits.

It is found in the cytoplasm. The catalysed reaction is N(2)-formyl-N(1)-(5-phospho-beta-D-ribosyl)glycinamide + L-glutamine + ATP + H2O = 2-formamido-N(1)-(5-O-phospho-beta-D-ribosyl)acetamidine + L-glutamate + ADP + phosphate + H(+). It functions in the pathway purine metabolism; IMP biosynthesis via de novo pathway; 5-amino-1-(5-phospho-D-ribosyl)imidazole from N(2)-formyl-N(1)-(5-phospho-D-ribosyl)glycinamide: step 1/2. Part of the phosphoribosylformylglycinamidine synthase complex involved in the purines biosynthetic pathway. Catalyzes the ATP-dependent conversion of formylglycinamide ribonucleotide (FGAR) and glutamine to yield formylglycinamidine ribonucleotide (FGAM) and glutamate. The FGAM synthase complex is composed of three subunits. PurQ produces an ammonia molecule by converting glutamine to glutamate. PurL transfers the ammonia molecule to FGAR to form FGAM in an ATP-dependent manner. PurS interacts with PurQ and PurL and is thought to assist in the transfer of the ammonia molecule from PurQ to PurL. This is Phosphoribosylformylglycinamidine synthase subunit PurL from Rhodopseudomonas palustris (strain BisA53).